A 293-amino-acid chain; its full sequence is Energy-coupling factor transporter ATP-binding protein EcfA2 (293 aa).

In terms of domain architecture, ABC transporter spans 3 to 246 (ITFQKVEHRY…ADELEKIGVD (244 aa)). 40–47 (GHTGSGKS) provides a ligand contact to ATP.

It belongs to the ABC transporter superfamily. Energy-coupling factor EcfA family. In terms of assembly, forms a stable energy-coupling factor (ECF) transporter complex composed of 2 membrane-embedded substrate-binding proteins (S component), 2 ATP-binding proteins (A component) and 2 transmembrane proteins (T component).

The protein localises to the cell membrane. ATP-binding (A) component of a common energy-coupling factor (ECF) ABC-transporter complex. Unlike classic ABC transporters this ECF transporter provides the energy necessary to transport a number of different substrates. The protein is Energy-coupling factor transporter ATP-binding protein EcfA2 of Bacillus cereus (strain ZK / E33L).